Consider the following 151-residue polypeptide: Ribosome-binding factor A (151 aa).

A disordered region spans residues arginine 120–glutamate 151.

Belongs to the RbfA family. Monomer. Binds 30S ribosomal subunits, but not 50S ribosomal subunits or 70S ribosomes.

The protein resides in the cytoplasm. Functionally, one of several proteins that assist in the late maturation steps of the functional core of the 30S ribosomal subunit. Associates with free 30S ribosomal subunits (but not with 30S subunits that are part of 70S ribosomes or polysomes). Required for efficient processing of 16S rRNA. May interact with the 5'-terminal helix region of 16S rRNA. The polypeptide is Ribosome-binding factor A (Xanthobacter autotrophicus (strain ATCC BAA-1158 / Py2)).